Consider the following 325-residue polypeptide: MTTSLVLAVPSKGRLQENAEAFFARAGLTLAKPRGVRDYRGTIAELDNVEIAYLSASEIASQLARGTVHLGVTGEDLIRESIVDADKRVALITSLGFGNANVVVAVPQSWIDVRTMADLDDVATGFRAQHNRRMRVATKYINLTRAFFASHGVVDYRIVESAGATEGAPAVGTAEMIVDITTTGATLTANGLRVLDDGVILRSQANLVASREADWSNGARETARVILDHIAARARASKYREVRTRFPGCDAALLKEAHDRFGVVSPFGGPTSSGMVTLHCPPDRLYALASFLRLHGADTVSIASLDYVFDRDNPLFEKLEVFLRT.

Belongs to the ATP phosphoribosyltransferase family. Long subfamily. Requires Mg(2+) as cofactor.

Its subcellular location is the cytoplasm. It catalyses the reaction 1-(5-phospho-beta-D-ribosyl)-ATP + diphosphate = 5-phospho-alpha-D-ribose 1-diphosphate + ATP. It participates in amino-acid biosynthesis; L-histidine biosynthesis; L-histidine from 5-phospho-alpha-D-ribose 1-diphosphate: step 1/9. Its activity is regulated as follows. Feedback inhibited by histidine. Its function is as follows. Catalyzes the condensation of ATP and 5-phosphoribose 1-diphosphate to form N'-(5'-phosphoribosyl)-ATP (PR-ATP). Has a crucial role in the pathway because the rate of histidine biosynthesis seems to be controlled primarily by regulation of HisG enzymatic activity. The chain is ATP phosphoribosyltransferase from Nitrobacter winogradskyi (strain ATCC 25391 / DSM 10237 / CIP 104748 / NCIMB 11846 / Nb-255).